We begin with the raw amino-acid sequence, 510 residues long: ATP synthase subunit alpha (510 aa).

169–176 (GDRQTGKT) serves as a coordination point for ATP.

It belongs to the ATPase alpha/beta chains family. As to quaternary structure, F-type ATPases have 2 components, CF(1) - the catalytic core - and CF(0) - the membrane proton channel. CF(1) has five subunits: alpha(3), beta(3), gamma(1), delta(1), epsilon(1). CF(0) has three main subunits: a(1), b(2) and c(9-12). The alpha and beta chains form an alternating ring which encloses part of the gamma chain. CF(1) is attached to CF(0) by a central stalk formed by the gamma and epsilon chains, while a peripheral stalk is formed by the delta and b chains.

It is found in the cell membrane. It carries out the reaction ATP + H2O + 4 H(+)(in) = ADP + phosphate + 5 H(+)(out). Its function is as follows. Produces ATP from ADP in the presence of a proton gradient across the membrane. The alpha chain is a regulatory subunit. In Buchnera aphidicola subsp. Schizaphis graminum (strain Sg), this protein is ATP synthase subunit alpha.